Consider the following 86-residue polypeptide: uncharacterized protein (86 aa).

An N-terminal signal peptide occupies residues 1–25; it reads MNLRKILLSSALSLGMLVSAAPVLA.

This is an uncharacterized protein from Bacillus subtilis (strain 168).